The sequence spans 271 residues: MERLNEYRINRAVASLRCFDNDLMRRLHSSVTVLVTVRSAKFVCFKRRDYVLMNCIVRIVSALHLNRAEKTALLHYLSRRLLFITPGMKYDLEPWMLARRKTDFKFFTTGFLIAEKISVKMALRSMSFEVSFSQVPSSVPFVRSPVVLMNACRVTVTATIMVETISRSSAVTQPVCLRSMLRVMVSPELWPIVSQGLCYFPGYRRLSYANVEEWVFHVHGKYGESHPECFGQCKQCSTRQPLSLFCSAQLAYLRNVFMERRARVAGERPYS.

This is an uncharacterized protein from Galliformes (FAdV-1).